The sequence spans 292 residues: Elongation factor Ts (292 aa).

An involved in Mg(2+) ion dislocation from EF-Tu region spans residues 79–82 (TDFV).

It belongs to the EF-Ts family.

It is found in the cytoplasm. Its function is as follows. Associates with the EF-Tu.GDP complex and induces the exchange of GDP to GTP. It remains bound to the aminoacyl-tRNA.EF-Tu.GTP complex up to the GTP hydrolysis stage on the ribosome. This chain is Elongation factor Ts, found in Xylella fastidiosa (strain 9a5c).